The following is a 284-amino-acid chain: Avenin-like b8 (284 aa).

An N-terminal signal peptide occupies residues M1–A18.

Belongs to the prolamin family. Contains disulfide bonds.

Functionally, seed storage protein. Might be integrated via inter-chain disulfide bonds within the glutenin polymer. This Triticum aestivum (Wheat) protein is Avenin-like b8.